Reading from the N-terminus, the 573-residue chain is DNA ligase (573 aa).

E248 provides a ligand contact to ATP. K250 acts as the N6-AMP-lysine intermediate in catalysis. Residues R255, R270, E299, F340, R432, and K438 each contribute to the ATP site.

The protein belongs to the ATP-dependent DNA ligase family. Mg(2+) serves as cofactor.

It catalyses the reaction ATP + (deoxyribonucleotide)n-3'-hydroxyl + 5'-phospho-(deoxyribonucleotide)m = (deoxyribonucleotide)n+m + AMP + diphosphate.. DNA ligase that seals nicks in double-stranded DNA during DNA replication, DNA recombination and DNA repair. In Methanocaldococcus jannaschii (strain ATCC 43067 / DSM 2661 / JAL-1 / JCM 10045 / NBRC 100440) (Methanococcus jannaschii), this protein is DNA ligase.